The primary structure comprises 120 residues: UPF0231 protein YacL (120 aa).

It belongs to the UPF0231 family.

The sequence is that of UPF0231 protein YacL from Salmonella heidelberg (strain SL476).